The chain runs to 221 residues: Deoxyribose-phosphate aldolase (221 aa).

The active-site Proton donor/acceptor is the aspartate 90. Catalysis depends on lysine 152, which acts as the Schiff-base intermediate with acetaldehyde. The active-site Proton donor/acceptor is the lysine 181.

This sequence belongs to the DeoC/FbaB aldolase family. DeoC type 1 subfamily.

The protein localises to the cytoplasm. The catalysed reaction is 2-deoxy-D-ribose 5-phosphate = D-glyceraldehyde 3-phosphate + acetaldehyde. It participates in carbohydrate degradation; 2-deoxy-D-ribose 1-phosphate degradation; D-glyceraldehyde 3-phosphate and acetaldehyde from 2-deoxy-alpha-D-ribose 1-phosphate: step 2/2. Its function is as follows. Catalyzes a reversible aldol reaction between acetaldehyde and D-glyceraldehyde 3-phosphate to generate 2-deoxy-D-ribose 5-phosphate. This chain is Deoxyribose-phosphate aldolase, found in Exiguobacterium sp. (strain ATCC BAA-1283 / AT1b).